Here is a 336-residue protein sequence, read N- to C-terminus: UDP-3-O-acylglucosamine N-acyltransferase (336 aa).

Histidine 237 functions as the Proton acceptor in the catalytic mechanism.

It belongs to the transferase hexapeptide repeat family. LpxD subfamily. In terms of assembly, homotrimer.

It catalyses the reaction a UDP-3-O-[(3R)-3-hydroxyacyl]-alpha-D-glucosamine + a (3R)-hydroxyacyl-[ACP] = a UDP-2-N,3-O-bis[(3R)-3-hydroxyacyl]-alpha-D-glucosamine + holo-[ACP] + H(+). Its pathway is bacterial outer membrane biogenesis; LPS lipid A biosynthesis. In terms of biological role, catalyzes the N-acylation of UDP-3-O-acylglucosamine using 3-hydroxyacyl-ACP as the acyl donor. Is involved in the biosynthesis of lipid A, a phosphorylated glycolipid that anchors the lipopolysaccharide to the outer membrane of the cell. The sequence is that of UDP-3-O-acylglucosamine N-acyltransferase from Alcanivorax borkumensis (strain ATCC 700651 / DSM 11573 / NCIMB 13689 / SK2).